Reading from the N-terminus, the 274-residue chain is Rhamnulose-1-phosphate aldolase (274 aa).

E117 is an active-site residue. Zn(2+) is bound by residues H141, H143, and H212.

This sequence belongs to the aldolase class II family. RhaD subfamily. Homotetramer. Requires Zn(2+) as cofactor.

It is found in the cytoplasm. It carries out the reaction L-rhamnulose 1-phosphate = (S)-lactaldehyde + dihydroxyacetone phosphate. Its pathway is carbohydrate degradation; L-rhamnose degradation; glycerone phosphate from L-rhamnose: step 3/3. In terms of biological role, catalyzes the reversible cleavage of L-rhamnulose-1-phosphate to dihydroxyacetone phosphate (DHAP) and L-lactaldehyde. This chain is Rhamnulose-1-phosphate aldolase, found in Escherichia coli (strain SE11).